Consider the following 249-residue polypeptide: Proteasome activator complex subunit 1 (249 aa).

A disordered region spans residues proline 60–cysteine 101. A compositionally biased stretch (basic and acidic residues) spans proline 68–glycine 98.

The protein belongs to the PA28 family. As to quaternary structure, heterodimer of PSME1 and PSME2, which forms a hexameric ring. PSME1 can form homoheptamers.

In terms of biological role, implicated in immunoproteasome assembly and required for efficient antigen processing. The PA28 activator complex enhances the generation of class I binding peptides by altering the cleavage pattern of the proteasome. This is Proteasome activator complex subunit 1 (PSME1) from Macaca fascicularis (Crab-eating macaque).